We begin with the raw amino-acid sequence, 609 residues long: Proteasome-associated ATPase (609 aa).

The tract at residues Met-1–Ala-24 is disordered. Residues Ser-20–Gln-96 are a coiled coil. Gly-296–Leu-301 lines the ATP pocket. The interval Tyr-608–Leu-609 is docks into pockets in the proteasome alpha-ring.

The protein belongs to the AAA ATPase family. In terms of assembly, homohexamer. Assembles into a hexameric ring structure that caps the 20S proteasome core. Strongly interacts with the prokaryotic ubiquitin-like protein Pup through a hydrophobic interface; the interacting region of ARC lies in its N-terminal coiled-coil domain. There is one Pup binding site per ARC hexamer ring. Upon ATP-binding, the C-terminus of ARC interacts with the alpha-rings of the proteasome core, possibly by binding to the intersubunit pockets.

It functions in the pathway protein degradation; proteasomal Pup-dependent pathway. ATPase which is responsible for recognizing, binding, unfolding and translocation of pupylated proteins into the bacterial 20S proteasome core particle. May be essential for opening the gate of the 20S proteasome via an interaction with its C-terminus, thereby allowing substrate entry and access to the site of proteolysis. Thus, the C-termini of the proteasomal ATPase may function like a 'key in a lock' to induce gate opening and therefore regulate proteolysis. The chain is Proteasome-associated ATPase from Mycobacterium bovis (strain BCG / Pasteur 1173P2).